We begin with the raw amino-acid sequence, 281 residues long: Ribosomal RNA small subunit methyltransferase A (281 aa).

Asparagine 24, leucine 26, glycine 51, glutamate 72, aspartate 96, and asparagine 123 together coordinate S-adenosyl-L-methionine.

It belongs to the class I-like SAM-binding methyltransferase superfamily. rRNA adenine N(6)-methyltransferase family. RsmA subfamily.

The protein localises to the cytoplasm. It carries out the reaction adenosine(1518)/adenosine(1519) in 16S rRNA + 4 S-adenosyl-L-methionine = N(6)-dimethyladenosine(1518)/N(6)-dimethyladenosine(1519) in 16S rRNA + 4 S-adenosyl-L-homocysteine + 4 H(+). Specifically dimethylates two adjacent adenosines (A1518 and A1519) in the loop of a conserved hairpin near the 3'-end of 16S rRNA in the 30S particle. May play a critical role in biogenesis of 30S subunits. The protein is Ribosomal RNA small subunit methyltransferase A of Ureaplasma urealyticum serovar 10 (strain ATCC 33699 / Western).